The primary structure comprises 201 residues: dTTP/UTP pyrophosphatase (201 aa).

Asp73 serves as the catalytic Proton acceptor.

It belongs to the Maf family. YhdE subfamily. It depends on a divalent metal cation as a cofactor.

It is found in the cytoplasm. It carries out the reaction dTTP + H2O = dTMP + diphosphate + H(+). The catalysed reaction is UTP + H2O = UMP + diphosphate + H(+). In terms of biological role, nucleoside triphosphate pyrophosphatase that hydrolyzes dTTP and UTP. May have a dual role in cell division arrest and in preventing the incorporation of modified nucleotides into cellular nucleic acids. The sequence is that of dTTP/UTP pyrophosphatase from Pseudomonas aeruginosa (strain ATCC 15692 / DSM 22644 / CIP 104116 / JCM 14847 / LMG 12228 / 1C / PRS 101 / PAO1).